Reading from the N-terminus, the 475-residue chain is Ribulose bisphosphate carboxylase large chain (475 aa).

A propeptide spanning residues 1–2 (MS) is cleaved from the precursor. Pro3 is subject to N-acetylproline. An N6,N6,N6-trimethyllysine modification is found at Lys14. The substrate site is built by Asn123 and Thr173. Lys175 serves as the catalytic Proton acceptor. Lys177 provides a ligand contact to substrate. Mg(2+) is bound by residues Lys201, Asp203, and Glu204. An N6-carboxylysine modification is found at Lys201. His294 acts as the Proton acceptor in catalysis. Residues Arg295, His327, and Ser379 each coordinate substrate.

This sequence belongs to the RuBisCO large chain family. Type I subfamily. As to quaternary structure, heterohexadecamer of 8 large chains and 8 small chains; disulfide-linked. The disulfide link is formed within the large subunit homodimers. Mg(2+) is required as a cofactor. In terms of processing, the disulfide bond which can form in the large chain dimeric partners within the hexadecamer appears to be associated with oxidative stress and protein turnover.

It localises to the plastid. The protein localises to the chloroplast. The enzyme catalyses 2 (2R)-3-phosphoglycerate + 2 H(+) = D-ribulose 1,5-bisphosphate + CO2 + H2O. It catalyses the reaction D-ribulose 1,5-bisphosphate + O2 = 2-phosphoglycolate + (2R)-3-phosphoglycerate + 2 H(+). Functionally, ruBisCO catalyzes two reactions: the carboxylation of D-ribulose 1,5-bisphosphate, the primary event in carbon dioxide fixation, as well as the oxidative fragmentation of the pentose substrate in the photorespiration process. Both reactions occur simultaneously and in competition at the same active site. This chain is Ribulose bisphosphate carboxylase large chain, found in Pelargonium hortorum (Common geranium).